The chain runs to 127 residues: Large ribosomal subunit protein uL18 (127 aa).

The segment at 1–26 is disordered; it reads MASTLTVRKSLSDRAKARARRQARGR. A compositionally biased stretch (basic residues) spans 17 to 26; that stretch reads ARARRQARGR.

This sequence belongs to the universal ribosomal protein uL18 family. Part of the 50S ribosomal subunit; part of the 5S rRNA/L5/L18/L25 subcomplex. Contacts the 5S and 23S rRNAs.

In terms of biological role, this is one of the proteins that bind and probably mediate the attachment of the 5S RNA into the large ribosomal subunit, where it forms part of the central protuberance. This is Large ribosomal subunit protein uL18 from Cutibacterium acnes (strain DSM 16379 / KPA171202) (Propionibacterium acnes).